A 509-amino-acid chain; its full sequence is ATP synthase subunit alpha, mitochondrial (509 aa).

171 to 178 (GDRQTGKT) provides a ligand contact to ATP.

This sequence belongs to the ATPase alpha/beta chains family. F-type ATPases have 2 components, CF(1) - the catalytic core - and CF(0) - the membrane proton channel. CF(1) has five subunits: alpha(3), beta(3), gamma(1), delta(1), epsilon(1). CF(0) has three main subunits: a, b and c.

It localises to the mitochondrion. Its subcellular location is the mitochondrion inner membrane. Its function is as follows. Mitochondrial membrane ATP synthase (F(1)F(0) ATP synthase or Complex V) produces ATP from ADP in the presence of a proton gradient across the membrane which is generated by electron transport complexes of the respiratory chain. F-type ATPases consist of two structural domains, F(1) - containing the extramembraneous catalytic core, and F(0) - containing the membrane proton channel, linked together by a central stalk and a peripheral stalk. During catalysis, ATP synthesis in the catalytic domain of F(1) is coupled via a rotary mechanism of the central stalk subunits to proton translocation. Subunits alpha and beta form the catalytic core in F(1). Rotation of the central stalk against the surrounding alpha(3)beta(3) subunits leads to hydrolysis of ATP in three separate catalytic sites on the beta subunits. Subunit alpha does not bear the catalytic high-affinity ATP-binding sites. This chain is ATP synthase subunit alpha, mitochondrial (ATPA), found in Nicotiana plumbaginifolia (Leadwort-leaved tobacco).